Consider the following 182-residue polypeptide: Ribosome-recycling factor (182 aa).

The disordered stretch occupies residues 136 to 160; that stretch reads VKKSEKDGDLSEDQSRDEQEKIQKE.

It belongs to the RRF family.

The protein localises to the cytoplasm. Its function is as follows. Responsible for the release of ribosomes from messenger RNA at the termination of protein biosynthesis. May increase the efficiency of translation by recycling ribosomes from one round of translation to another. This Prochlorococcus marinus (strain NATL1A) protein is Ribosome-recycling factor.